We begin with the raw amino-acid sequence, 544 residues long: Chaperonin GroEL (544 aa).

Residues 30-33 (TLGP), lysine 51, 87-91 (DGTTT), glycine 415, 481-483 (DAL), and aspartate 497 each bind ATP.

This sequence belongs to the chaperonin (HSP60) family. In terms of assembly, forms a cylinder of 14 subunits composed of two heptameric rings stacked back-to-back. Interacts with the co-chaperonin GroES.

It is found in the cytoplasm. The enzyme catalyses ATP + H2O + a folded polypeptide = ADP + phosphate + an unfolded polypeptide.. Together with its co-chaperonin GroES, plays an essential role in assisting protein folding. The GroEL-GroES system forms a nano-cage that allows encapsulation of the non-native substrate proteins and provides a physical environment optimized to promote and accelerate protein folding. The sequence is that of Chaperonin GroEL from Chlamydia trachomatis serovar A (strain ATCC VR-571B / DSM 19440 / HAR-13).